The sequence spans 150 residues: Histone H2B.2 (150 aa).

Positions 1-16 (MAPKAEKKPAAKKPAE) are enriched in basic and acidic residues. A disordered region spans residues 1 to 57 (MAPKAEKKPAAKKPAEEEPAAEKAPAGKKPKAEKRVPAGKSAGKEGGEGKRGRKKGK). N6-acetyllysine is present on residues Lys7 and Lys34. Lys146 participates in a covalent cross-link: Glycyl lysine isopeptide (Lys-Gly) (interchain with G-Cter in ubiquitin).

The protein belongs to the histone H2B family. As to quaternary structure, the nucleosome is a histone octamer containing two molecules each of H2A, H2B, H3 and H4 assembled in one H3-H4 heterotetramer and two H2A-H2B heterodimers. The octamer wraps approximately 147 bp of DNA. In terms of processing, can be acetylated to form H2BK6ac and H2BK33ac. Monoubiquitinated to form H2BK143ub1; may give a specific tag for epigenetic transcriptional activation.

The protein localises to the nucleus. Its subcellular location is the chromosome. Its function is as follows. Core component of nucleosome. Nucleosomes wrap and compact DNA into chromatin, limiting DNA accessibility to the cellular machineries which require DNA as a template. Histones thereby play a central role in transcription regulation, DNA repair, DNA replication and chromosomal stability. DNA accessibility is regulated via a complex set of post-translational modifications of histones, also called histone code, and nucleosome remodeling. The chain is Histone H2B.2 from Zea mays (Maize).